The following is a 200-amino-acid chain: BmK-YA precursor (200 aa).

The signal sequence occupies residues 1 to 23 (MIFHQFYSILILCLIFPNQVVQS). Positions 24–34 (DKERQDWIPSD) are excised as a propeptide. A disordered region spans residues 30–200 (WIPSDYGGYM…GYMNPAGRSD (171 aa)). At alanine 42 the chain carries Alanine amide. Residues 45–100 (SDEERQDWIPSDYGGHMNPAGRSDEERQDWIPSDYGGHMNPAGRSNEERQDWIPSD) constitute a propeptide that is removed on maturation. Position 108 is an alanine amide (alanine 108). Positions 111–144 (SDEERQDWIPSDYGGHMNPAGRSNEERQDWIPSD) are excised as a propeptide. Alanine 152 is modified (alanine amide). Positions 155–188 (SDEERQDWIPSDYGGHMNPAGRSDEERQDWIPSD) are excised as a propeptide. At alanine 196 the chain carries Alanine amide. The propeptide occupies 199 to 200 (SD).

As to expression, venom gland.

Its subcellular location is the secreted. In terms of biological role, synthetic BmK-YA activates human opioid receptors in vitro, with highest activity on the delta-type/OPRD1 receptor (EC(50)=2.5 uM) and lower activity on mu-type/OPRM1 and kappa-type/OPRK1 receptors (EC(50)=17 uM and 30 uM, respectively). The chain is BmK-YA precursor from Olivierus martensii (Manchurian scorpion).